An 89-amino-acid chain; its full sequence is Long neurotoxin homolog TA-bm16 (89 aa).

A signal peptide spans 1 to 21 (MKTLLLTLVVVTIVCLDLGYT). Cystine bridges form between C24–C45, C27–C32, C38–C66, C70–C81, and C82–C87.

Belongs to the three-finger toxin family. Ancestral subfamily. Orphan group V sub-subfamily. Expressed by the venom gland.

The protein localises to the secreted. Exhibits M2 muscarinic acetylcholine receptor (CHRM2)-blocking activity, but has a weak binding activity toward nicotinic AChR. Moreover, it inhibits collagen-induced platelet aggregation. This is Long neurotoxin homolog TA-bm16 from Bungarus multicinctus (Many-banded krait).